The primary structure comprises 66 residues: Alpha-conotoxin GID (66 aa).

An N-terminal signal peptide occupies residues 1–21 (MGMRMMFTVFLLVVLAATIVS). Positions 22 to 44 (FTSDRASDGRNVAAKAFHRIGRT) are excised as a propeptide. Positions 45–48 (IRDE) are N-terminal tail important for activity on alpha-3-beta-2/CHRNA3-CHRNB2 and alpha-4-beta-2/CHRNA4-CHRNB2 nAChR. A 4-carboxyglutamate modification is found at Glu48. Cystine bridges form between Cys49–Cys55 and Cys50–Cys63. The interval 51–53 (SNP) is ser-Xaa-Pro motif, crucial for potent interaction with nAChR. Residue Pro60 is modified to 4-hydroxyproline.

It belongs to the conotoxin A superfamily. In terms of processing, gamma-carboxyglutamation of Glu-48 seems to be not important for nAChR inhibition, since synthetic peptides without this modification do not show change in inhibition of alpha-7/CHRNA7 and alpha-3-beta-2/CHRNA3-CHRNB2 nAChR and show a 2.3-fold increase in inhibition of alpha-4-beta-2/CHRNA4-CHRNB2 nAChR. Hydroxylation of Pro-60 seems to be important for nAChR inhibition, since synthetic peptides without this modification show a small decrease in inhibition of alpha-7/CHRNA7 and alpha-3-beta-2/CHRNA3-CHRNB2 nAChR and a very important decrease in inhibition of alpha-4-beta-2/CHRNA4-CHRNB2 nAChR. Post-translationally, an amidation of Cys-63 increases potency against alpha-7/CHRNA7 (2.6-fold) and alpha-3-beta-2/CHRNA3-CHRNB2 (2-fold) nAChR. On the other hand, the peptide has no more activity on alpha-4-beta-2/CHRNA4-CHRNB2 nAChR with an amidated Cys-63. Expressed by the venom duct.

Its subcellular location is the secreted. In terms of biological role, alpha-conotoxins act on postsynaptic membranes, they bind to the nicotinic acetylcholine receptors (nAChR) and thus inhibit them. This toxin reversibly blocks alpha-3-beta-2/CHRNA3-CHRNB2 (IC(50)=3.1-5.1 nM), alpha-7/CHRNA7 (IC(50)=4.5-5.1 nM), and alpha-4-beta-2/CHRNA4-CHRNB2 (IC(50)=128.6-390 nM) nAChRs. The protein is Alpha-conotoxin GID of Conus geographus (Geography cone).